Reading from the N-terminus, the 126-residue chain is Small ribosomal subunit protein uS13 (126 aa).

The segment at 98 to 126 is disordered; the sequence is PLRGQSTKNNARTRKGKKKTVANKKKATK. The span at 108–126 shows a compositional bias: basic residues; that stretch reads ARTRKGKKKTVANKKKATK.

Belongs to the universal ribosomal protein uS13 family. Part of the 30S ribosomal subunit. Forms a loose heterodimer with protein S19. Forms two bridges to the 50S subunit in the 70S ribosome.

Located at the top of the head of the 30S subunit, it contacts several helices of the 16S rRNA. In the 70S ribosome it contacts the 23S rRNA (bridge B1a) and protein L5 of the 50S subunit (bridge B1b), connecting the 2 subunits; these bridges are implicated in subunit movement. Contacts the tRNAs in the A and P-sites. The sequence is that of Small ribosomal subunit protein uS13 from Parabacteroides distasonis (strain ATCC 8503 / DSM 20701 / CIP 104284 / JCM 5825 / NCTC 11152).